We begin with the raw amino-acid sequence, 285 residues long: Small ribosomal subunit protein mS23 (285 aa).

Belongs to the mitochondrion-specific ribosomal protein mS23 family. In terms of assembly, component of the mitochondrial small ribosomal subunit.

It is found in the mitochondrion. The sequence is that of Small ribosomal subunit protein mS23 (RSM25) from Debaryomyces hansenii (strain ATCC 36239 / CBS 767 / BCRC 21394 / JCM 1990 / NBRC 0083 / IGC 2968) (Yeast).